The sequence spans 456 residues: Glutamate--tRNA ligase 1 (456 aa).

Residues 9 to 19 (PSPTGQIHIGN) carry the 'HIGH' region motif. The short motif at 250–254 (GLSKR) is the 'KMSKS' region element. An ATP-binding site is contributed by K253.

It belongs to the class-I aminoacyl-tRNA synthetase family. Glutamate--tRNA ligase type 1 subfamily. Monomer.

The protein resides in the cytoplasm. It carries out the reaction tRNA(Glu) + L-glutamate + ATP = L-glutamyl-tRNA(Glu) + AMP + diphosphate. Its function is as follows. Catalyzes the attachment of glutamate to tRNA(Glu) in a two-step reaction: glutamate is first activated by ATP to form Glu-AMP and then transferred to the acceptor end of tRNA(Glu). The sequence is that of Glutamate--tRNA ligase 1 from Chelativorans sp. (strain BNC1).